A 364-amino-acid polypeptide reads, in one-letter code: FK506-binding protein 4 (364 aa).

Disordered regions lie at residues 92 to 148 (SMFG…DDEI) and 168 to 239 (EADK…PTKP). Residues 94 to 148 (FGDDEHGEDEDNEEEEGEEGEDEEMEGEDEDEDEEDEDEEDEDEEEEDDEEDDEI) are compositionally biased toward acidic residues. Residues 168-184 (EADKNKQQKKPKQEEPV) show a composition bias toward basic and acidic residues. A compositionally biased stretch (low complexity) spans 185–239 (KQVTPVKPTAQAAKPTAATTTTTTTTTTTPTKQTTPAKPAAKPVTPTKPVTPTKP). Positions 277–363 (GKKVGVKYIG…IFDVELVSCA (87 aa)) constitute a PPIase FKBP-type domain.

It belongs to the FKBP-type PPIase family. As to quaternary structure, binds to histones H3 and H4.

Its subcellular location is the nucleus. It catalyses the reaction [protein]-peptidylproline (omega=180) = [protein]-peptidylproline (omega=0). Inhibited by both FK506 and rapamycin. In terms of biological role, PPIase that acts as a histone chaperone. Histone proline isomerase that increases the rate of cis-trans isomerization at prolines on the histone H3 N-terminal tail. Proline isomerization influences H3 methylation thereby regulating gene expression. The sequence is that of FK506-binding protein 4 (fkbp4) from Dictyostelium discoideum (Social amoeba).